The sequence spans 128 residues: Large ribosomal subunit protein uL22 (128 aa).

This sequence belongs to the universal ribosomal protein uL22 family. In terms of assembly, part of the 50S ribosomal subunit.

In terms of biological role, this protein binds specifically to 23S rRNA; its binding is stimulated by other ribosomal proteins, e.g. L4, L17, and L20. It is important during the early stages of 50S assembly. It makes multiple contacts with different domains of the 23S rRNA in the assembled 50S subunit and ribosome. Functionally, the globular domain of the protein is located near the polypeptide exit tunnel on the outside of the subunit, while an extended beta-hairpin is found that lines the wall of the exit tunnel in the center of the 70S ribosome. The sequence is that of Large ribosomal subunit protein uL22 from Prochlorococcus marinus (strain MIT 9301).